The sequence spans 98 residues: MSPIFMNITLAFTISLLGMLVYRSHLMASLLCLEGMMMSLFIMIALMASNAHSPLTNIMPIILLVFAACETAVGLALLVSISNTYGLDYIHNLNLLQC.

The next 3 helical transmembrane spans lie at 1-21, 26-46, and 61-81; these read MSPI…GMLV, LMAS…MIAL, and IILL…LVSI.

This sequence belongs to the complex I subunit 4L family. As to quaternary structure, core subunit of respiratory chain NADH dehydrogenase (Complex I) which is composed of 45 different subunits.

Its subcellular location is the mitochondrion inner membrane. The enzyme catalyses a ubiquinone + NADH + 5 H(+)(in) = a ubiquinol + NAD(+) + 4 H(+)(out). Functionally, core subunit of the mitochondrial membrane respiratory chain NADH dehydrogenase (Complex I) which catalyzes electron transfer from NADH through the respiratory chain, using ubiquinone as an electron acceptor. Part of the enzyme membrane arm which is embedded in the lipid bilayer and involved in proton translocation. This Chlorocebus sabaeus (Green monkey) protein is NADH-ubiquinone oxidoreductase chain 4L (MT-ND4L).